The sequence spans 585 residues: Frizzled-5 (585 aa).

The signal sequence occupies residues 1-26; the sequence is MARPDPSAPPSLLLLLLAQLVGRAAA. At 27–238 the chain is on the extracellular side; sequence ASKAPVCQEI…PDERTFATFW (212 aa). The FZ domain occupies 28–150; sequence SKAPVCQEIT…GDAEVLCMDY (123 aa). 5 cysteine pairs are disulfide-bonded: cysteine 33–cysteine 94, cysteine 41–cysteine 87, cysteine 78–cysteine 116, cysteine 105–cysteine 147, and cysteine 109–cysteine 133. An N-linked (GlcNAc...) asparagine glycan is attached at asparagine 47. N-linked (GlcNAc...) asparagine glycosylation occurs at asparagine 151. The disordered stretch occupies residues 156–182; that stretch reads TTASPKSFPAKPTLPGPPGAPSSGGEC. The helical transmembrane segment at 239 to 259 threads the bilayer; that stretch reads IGLWSVLCFISTSTTVATFLI. The Cytoplasmic segment spans residues 260-270; the sequence is DMERFRYPERP. Residues 271–291 traverse the membrane as a helical segment; sequence IIFLSACYLCVSLGFLVRLVV. At 292–315 the chain is on the extracellular side; it reads GHASVACSREHSHIHYETTGPALC. Residues 316–336 traverse the membrane as a helical segment; the sequence is TVVFLLVYFFGMASSIWWVIL. Topologically, residues 337–358 are cytoplasmic; it reads SLTWFLAAGMKWGNEAIAGYAQ. A helical membrane pass occupies residues 359 to 379; it reads YFHLAAWLIPSVKSITALALS. Topologically, residues 380 to 402 are extracellular; sequence SVDGDPVAGVCYVGNQNLNSLRG. The helical transmembrane segment at 403–423 threads the bilayer; that stretch reads FVLGPLVLYLLVGTLFLLAGF. The Cytoplasmic segment spans residues 424-449; sequence VSLFRIRSVIKQGGTKTDKLEKLMIR. Residues 450-470 form a helical membrane-spanning segment; it reads IGIFTLLYTVPASIVVACYLY. At 471 to 500 the chain is on the extracellular side; that stretch reads EQHYRESWEAALTCACPGSDAGQPRAKPEY. The helical transmembrane segment at 501-521 threads the bilayer; sequence WVLMLKYFMCLVVGITSGVWI. Residues 522–585 lie on the Cytoplasmic side of the membrane; that stretch reads WSGKTLESWR…YHKQVSLSHV (64 aa). Residues 525 to 530 carry the Lys-Thr-X-X-X-Trp motif, mediates interaction with the PDZ domain of Dvl family members motif; that stretch reads KTLESW. The short motif at 583 to 585 is the PDZ-binding element; that stretch reads SHV.

The protein belongs to the G-protein coupled receptor Fz/Smo family. In terms of assembly, binding of unsaturated fatty acid molecules (via FZ domain) promotes homodimerization (via FZ domain). Interacts with WNT2B. Interacts with WNT7A. Interacts with GOPC. Post-translationally, ubiquitinated by RNF43 and ZNRF3, leading to its degradation by the proteasome.

The protein resides in the cell membrane. It localises to the golgi apparatus membrane. It is found in the synapse. Its subcellular location is the perikaryon. The protein localises to the cell projection. The protein resides in the dendrite. It localises to the axon. Functionally, receptor for Wnt proteins. Functions in the canonical Wnt/beta-catenin signaling pathway. In vitro activates WNT2, WNT10B, WNT5A, but not WNT2B or WNT4 signaling. In neurons, activation by WNT7A promotes formation of synapses. May be involved in transduction and intercellular transmission of polarity information during tissue morphogenesis and/or in differentiated tissues. Plays a role in yolk sac angiogenesis and in placental vascularization. Plays a role in ocular development. The chain is Frizzled-5 (Fzd5) from Rattus norvegicus (Rat).